A 113-amino-acid chain; its full sequence is Nitrogenase-stabilizing/protective protein NifW (113 aa).

This sequence belongs to the NifW family. As to quaternary structure, homotrimer; associates with NifD.

Functionally, may protect the nitrogenase Fe-Mo protein from oxidative damage. The polypeptide is Nitrogenase-stabilizing/protective protein NifW (Dechloromonas aromatica (strain RCB)).